We begin with the raw amino-acid sequence, 94 residues long: MINHFSVLGIKPSAKEDDIKKAYRRLSNKYHPDKLLGASDEEKEQASQQLERVKKAYEVLSDPKLRNAFIRDFNNVIVTDPNSAMRELWDQFYP.

A J domain is found at 3 to 93; that stretch reads NHFSVLGIKP…AMRELWDQFY (91 aa). The segment at 74-94 is essential for interaction with AtcC; that stretch reads NNVIVTDPNSAMRELWDQFYP.

Interacts via its C-terminal extension with AtcC. Does not interact with AtcA and AtcB.

In terms of biological role, involved in cold adaptation. The J-domain is functional and can stimulate the ATPase activity of the DnaK chaperone. May work as a co-chaperone of the DnaK system to support cold resistance. The polypeptide is Adaptation to cold protein J (Shewanella oneidensis (strain ATCC 700550 / JCM 31522 / CIP 106686 / LMG 19005 / NCIMB 14063 / MR-1)).